The sequence spans 628 residues: Phosphomethylpyrimidine synthase (628 aa).

Residues asparagine 228, methionine 257, tyrosine 286, histidine 322, 342 to 344, 383 to 386, and glutamate 422 each bind substrate; these read SRG and DGLR. Histidine 426 contributes to the Zn(2+) binding site. Tyrosine 449 contributes to the substrate binding site. Position 490 (histidine 490) interacts with Zn(2+). 3 residues coordinate [4Fe-4S] cluster: cysteine 570, cysteine 573, and cysteine 578.

Belongs to the ThiC family. In terms of assembly, homodimer. Requires [4Fe-4S] cluster as cofactor.

It catalyses the reaction 5-amino-1-(5-phospho-beta-D-ribosyl)imidazole + S-adenosyl-L-methionine = 4-amino-2-methyl-5-(phosphooxymethyl)pyrimidine + CO + 5'-deoxyadenosine + formate + L-methionine + 3 H(+). It participates in cofactor biosynthesis; thiamine diphosphate biosynthesis. Catalyzes the synthesis of the hydroxymethylpyrimidine phosphate (HMP-P) moiety of thiamine from aminoimidazole ribotide (AIR) in a radical S-adenosyl-L-methionine (SAM)-dependent reaction. This Methylibium petroleiphilum (strain ATCC BAA-1232 / LMG 22953 / PM1) protein is Phosphomethylpyrimidine synthase.